Here is a 1160-residue protein sequence, read N- to C-terminus: Pesticidal crystal protein Cry1Db (1160 aa).

The protein belongs to the delta endotoxin family.

Its function is as follows. Promotes colloidosmotic lysis by binding to the midgut epithelial cells of insects. The sequence is that of Pesticidal crystal protein Cry1Db (cry1Db) from Bacillus thuringiensis.